The primary structure comprises 235 residues: Large ribosomal subunit protein uL1 (235 aa).

The protein belongs to the universal ribosomal protein uL1 family. Part of the 50S ribosomal subunit.

In terms of biological role, binds directly to 23S rRNA. The L1 stalk is quite mobile in the ribosome, and is involved in E site tRNA release. Functionally, protein L1 is also a translational repressor protein, it controls the translation of the L11 operon by binding to its mRNA. This chain is Large ribosomal subunit protein uL1, found in Prochlorococcus marinus (strain MIT 9313).